The sequence spans 156 residues: Small ribosomal subunit protein uS7 (156 aa).

Belongs to the universal ribosomal protein uS7 family. Part of the 30S ribosomal subunit. Contacts proteins S9 and S11.

In terms of biological role, one of the primary rRNA binding proteins, it binds directly to 16S rRNA where it nucleates assembly of the head domain of the 30S subunit. Is located at the subunit interface close to the decoding center, probably blocks exit of the E-site tRNA. This chain is Small ribosomal subunit protein uS7, found in Nocardioides sp. (strain ATCC BAA-499 / JS614).